The sequence spans 424 residues: Adenylosuccinate synthetase 2 (424 aa).

GTP is bound by residues 11–17 and 39–41; these read GDEGKGK and GHT. Asp-12 acts as the Proton acceptor in catalysis. Mg(2+) contacts are provided by Asp-12 and Gly-39. Residues 12–15, 37–40, Thr-127, Arg-141, Gln-223, Thr-238, and Arg-302 each bind IMP; these read DEGK and NAGH. Residue His-40 is the Proton donor of the active site. 298-304 provides a ligand contact to substrate; sequence TTTGRGR. GTP is bound by residues Arg-304, 330–332, and 412–414; these read KLD and SVG.

The protein belongs to the adenylosuccinate synthetase family. Homodimer. The cofactor is Mg(2+).

It localises to the cytoplasm. The enzyme catalyses IMP + L-aspartate + GTP = N(6)-(1,2-dicarboxyethyl)-AMP + GDP + phosphate + 2 H(+). Its pathway is purine metabolism; AMP biosynthesis via de novo pathway; AMP from IMP: step 1/2. Plays an important role in the de novo pathway of purine nucleotide biosynthesis. Catalyzes the first committed step in the biosynthesis of AMP from IMP. This Methanosarcina acetivorans (strain ATCC 35395 / DSM 2834 / JCM 12185 / C2A) protein is Adenylosuccinate synthetase 2.